Reading from the N-terminus, the 431-residue chain is MAKIINVIGREIMDSRGNPTVEAEVHLEGGFVGMAAAPSGASTGSREALELRDGDKSRYLGKGVLTAVANVNDLIRTALLGKDATAQAELDQIMIDLDGTENKDKLGANAILAVSLAAAKAAAAFKGIPLYAHIAELNGTPGQYSMPVPMMNILNGGEHADNNVDIQEFMVQPVGAKTFREALRMGAEIFHTLKKVLHDKGLSTSVGDEGGFAPNLASNADALAIIKEAVELAGYKLGSDVTLALDCAASEFYKDGKYDLAGEGKVFDSNGFSDFLKSLADQYPIVSIEDGLDESDWDGWAYQTQIMGDKIQLVGDDLFVTNTKILTRGIENGIANSILIKFNQIGSLTETLAAIRMAKEAGYTAVISHRSGETEDSTIADLAVGTAAGQIKTGSLCRSDRVAKYNQLLRIEEQLGEKAPYRGLKEIKGQA.

Glutamine 167 serves as a coordination point for (2R)-2-phosphoglycerate. Catalysis depends on glutamate 209, which acts as the Proton donor. Mg(2+) contacts are provided by aspartate 246, glutamate 289, and aspartate 316. (2R)-2-phosphoglycerate contacts are provided by lysine 341, arginine 370, serine 371, and lysine 392. Lysine 341 (proton acceptor) is an active-site residue.

It belongs to the enolase family. As to quaternary structure, component of the RNA degradosome, a multiprotein complex involved in RNA processing and mRNA degradation. Mg(2+) is required as a cofactor.

The protein localises to the cytoplasm. Its subcellular location is the secreted. It is found in the cell surface. It carries out the reaction (2R)-2-phosphoglycerate = phosphoenolpyruvate + H2O. Its pathway is carbohydrate degradation; glycolysis; pyruvate from D-glyceraldehyde 3-phosphate: step 4/5. Its function is as follows. Catalyzes the reversible conversion of 2-phosphoglycerate (2-PG) into phosphoenolpyruvate (PEP). It is essential for the degradation of carbohydrates via glycolysis. This is Enolase from Shewanella baltica (strain OS223).